The following is a 97-amino-acid chain: Phosphoribosyl-ATP pyrophosphatase (97 aa).

It belongs to the PRA-PH family.

The protein localises to the cytoplasm. The enzyme catalyses 1-(5-phospho-beta-D-ribosyl)-ATP + H2O = 1-(5-phospho-beta-D-ribosyl)-5'-AMP + diphosphate + H(+). It functions in the pathway amino-acid biosynthesis; L-histidine biosynthesis; L-histidine from 5-phospho-alpha-D-ribose 1-diphosphate: step 2/9. The protein is Phosphoribosyl-ATP pyrophosphatase of Methanoculleus marisnigri (strain ATCC 35101 / DSM 1498 / JR1).